Reading from the N-terminus, the 208-residue chain is EF-hand protein 5 variant 2 (208 aa).

The disordered stretch occupies residues 1–35; that stretch reads MQARGTVKVQGDANVDGKMSTGQHPHHQHLNSTQA. EF-hand domains lie at 64-98, 99-134, 135-170, and 171-206; these read MAEGFYVLSGGYKKLFIPSKDVYALMQNVGMHLTE, EEFHDALRVIGQSEPQNADELSFSDFLLLMTREVDD, TMADELRSAFFHYDKHKTGYVTRKQFTELFATLAER, and STPEELEELLAVAEVDETDDKIDYNRFVNELTSRVN. Glu118, Asp123, Asp148, Thr152, and Tyr154 together coordinate Ca(2+).

This Trypanosoma cruzi protein is EF-hand protein 5 variant 2.